Consider the following 426-residue polypeptide: MAIEEKSTSAEPGPYDALSRFSSLTGEDDRKWWEHTGPVLEKVMRDSGYELQSQYIYLYFVQQHLIPYLGKFPTRGQDDHRWQSNLTPYKVPYELSWNVSHKVVRISWDPVCDASGTENDAFNKKAIHDCTRQLAELDSTVILDRYRLLHKDLVITDEEEQQLLRRDVLPKSGRGQHNLAVDFQEGGITLKVYFYPYMKFLATGTPIEELFFSAIEKLRIADIDEAVGMLKCFLSPKSDDGKPSVDEKVFPSLLACDLCDPSKSRIKYYVIDKWVKWERIANLWTIGGRRLEDPYCAKGLALLKELWDLLAIPEGDRGDIWPNLVLGQPPTHLMTTIANYTLSPASRFPEPQVYLTTFGLNDMAIIDALTAFYERVGFTDMAKSYKKNVQSYYPNLDLNQTNWVHEAVSFSYRNSKPYLSVYYSPF.

E94 provides a ligand contact to substrate. Residues R105, K191, and Y193 each coordinate dimethylallyl diphosphate. Y195 is a binding site for substrate. Dimethylallyl diphosphate is bound by residues K267, Y269, Q352, Y354, Y418, and Y422.

This sequence belongs to the tryptophan dimethylallyltransferase family.

It carries out the reaction 6-hydroxydeoxybrevianamide E + dimethylallyl diphosphate = notoamide S + diphosphate. It participates in alkaloid biosynthesis. Its activity is regulated as follows. Addition of 5 mM Mg(2+), Ca(2+) or Mn(2+) slightly enhances catalysis (about 100-120%). Significant reduction of enzyme activity (2%-35%) is observed with Cu(2+), Zn(2+), Fe(2+), or Sn(2+) (5 mM). Functionally, prenyltransferase; part of the gene cluster that mediates the biosynthesis of notoamide, a fungal indole alkaloid that belongs to a family of natural products containing a characteristic bicyclo[2.2.2]diazaoctane core. The first step of notoamide biosynthesis involves coupling of L-proline and L-tryptophan by the bimodular NRPS notE, to produce cyclo-L-tryptophan-L-proline called brevianamide F. The reverse prenyltransferase notF then acts as a deoxybrevianamide E synthase and converts brevianamide F to deoxybrevianamide E via reverse prenylation at C-2 of the indole ring leading to the bicyclo[2.2.2]diazaoctane core. Deoxybrevianamide E is further hydroxylated at C-6 of the indole ring, likely catalyzed by the cytochrome P450 monooxygenase notG, to yield 6-hydroxy-deoxybrevianamide E. 6-hydroxy-deoxybrevianamide E is a specific substrate of the prenyltransferase notC for normal prenylation at C-7 to produce 6-hydroxy-7-prenyl-deoxybrevianamide, also called notoamide S. As the proposed pivotal branching point in notoamide biosynthesis, notoamide S can be diverted to notoamide E through an oxidative pyran ring closure putatively catalyzed by either notH cytochrome P450 monooxygenase or the notD FAD-linked oxidoreductase. This step would be followed by an indole 2,3-epoxidation-initiated pinacol-like rearrangement catalyzed by the notB FAD-dependent monooxygenase leading to the formation of notoamide C and notoamide D. On the other hand notoamide S is converted to notoamide T by notH (or notD), a bifunctional oxidase that also functions as the intramolecular Diels-Alderase responsible for generation of (+)-notoamide T. To generate antipodal (-)-notoaminide T, notH' (or notD') in Aspergillus versicolor is expected to catalyze a Diels-Alder reaction leading to the opposite stereochemistry. The remaining oxidoreductase notD (or notH) likely catalyzes the oxidative pyran ring formation to yield (+)-stephacidin A. The FAD-dependent monooxygenase notI is highly similar to notB and is predicted to catalyze a similar conversion from (+)-stephacidin A to (-)-notoamide B via the 2,3-epoxidation of (+)-stephacidin A followed by a pinacol-type rearrangement. Finally, it remains unclear which enzyme could be responsible for the final hydroxylation steps leading to notoamide A and sclerotiamide. The chain is 6-Hydroxy-7-prenyldeoxybrevianamide E synthase notC from Aspergillus sp. (strain MF297-2).